The primary structure comprises 225 residues: Guanylate kinase (225 aa).

The Guanylate kinase-like domain occupies 20–198 (GNLFMVVAPS…ALSELQCLVA (179 aa)). 27 to 34 (APSGAGKS) is a binding site for ATP.

Belongs to the guanylate kinase family.

It localises to the cytoplasm. It carries out the reaction GMP + ATP = GDP + ADP. Functionally, essential for recycling GMP and indirectly, cGMP. In Paraburkholderia xenovorans (strain LB400), this protein is Guanylate kinase.